Reading from the N-terminus, the 406-residue chain is Argininosuccinate synthase (406 aa).

Residues 11–19 and Ala38 contribute to the ATP site; that span reads AYSGGLDTS. Tyr91 and Ser96 together coordinate L-citrulline. Residue Gly121 participates in ATP binding. L-aspartate-binding residues include Thr123, Asn127, and Asp128. Asn127 provides a ligand contact to L-citrulline. L-citrulline is bound by residues Arg131, Ser181, Ser190, Glu266, and Tyr278.

Belongs to the argininosuccinate synthase family. Type 1 subfamily. Homotetramer.

Its subcellular location is the cytoplasm. The catalysed reaction is L-citrulline + L-aspartate + ATP = 2-(N(omega)-L-arginino)succinate + AMP + diphosphate + H(+). The protein operates within amino-acid biosynthesis; L-arginine biosynthesis; L-arginine from L-ornithine and carbamoyl phosphate: step 2/3. This Campylobacter jejuni subsp. jejuni serotype O:23/36 (strain 81-176) protein is Argininosuccinate synthase.